Consider the following 324-residue polypeptide: Aldo-keto reductase family 1 member A1-A (324 aa).

Residues 10 to 19 (GQRMPTVGLG), Thr20, Trp21, and Asp44 each bind NADP(+). Residue Tyr49 is the Proton donor of the active site. Positions 161, 162, 210, 212, 214, 262, 263, 264, 265, 268, 271, and 272 each coordinate NADP(+).

Belongs to the aldo/keto reductase family.

The protein localises to the cytoplasm. The protein resides in the cytosol. It is found in the apical cell membrane. The enzyme catalyses a primary alcohol + NADP(+) = an aldehyde + NADPH + H(+). It catalyses the reaction S-nitroso-CoA + NADPH + H(+) = sulfinamide-CoA + NADP(+). It carries out the reaction S-nitrosoglutathione + NADPH + H(+) = S-(hydroxysulfenamide)glutathione + NADP(+). Catalyzes the NADPH-dependent reduction of a wide variety of carbonyl-containing compounds to their corresponding alcohols. Displays enzymatic activity towards endogenous metabolites such as aromatic and aliphatic aldehydes, ketones, monosaccharides and bile acids. Acts as an aldehyde-detoxification enzyme. Also acts as an inhibitor of protein S-nitrosylation by mediating degradation of S-nitroso-coenzyme A (S-nitroso-CoA), a cofactor required to S-nitrosylate proteins. Also acts as a S-nitroso-glutathione reductase by catalyzing the NADPH-dependent reduction of S-nitrosoglutathione. Displays no reductase activity towards retinoids. This Danio rerio (Zebrafish) protein is Aldo-keto reductase family 1 member A1-A (akr1a1a).